Here is an 80-residue protein sequence, read N- to C-terminus: Acyl carrier protein (80 aa).

One can recognise a Carrier domain in the interval 4–79 (DEVKGQVYDI…DAINYIVEKK (76 aa)). Serine 39 carries the post-translational modification O-(pantetheine 4'-phosphoryl)serine.

This sequence belongs to the acyl carrier protein (ACP) family. Post-translationally, 4'-phosphopantetheine is transferred from CoA to a specific serine of apo-ACP by AcpS. This modification is essential for activity because fatty acids are bound in thioester linkage to the sulfhydryl of the prosthetic group.

The protein resides in the cytoplasm. It participates in lipid metabolism; fatty acid biosynthesis. Functionally, carrier of the growing fatty acid chain in fatty acid biosynthesis. The polypeptide is Acyl carrier protein (Chloroherpeton thalassium (strain ATCC 35110 / GB-78)).